We begin with the raw amino-acid sequence, 436 residues long: Carboxypeptidase A5 (436 aa).

Positions 1–33 (MQGTPAGGTSPGPSPMDRQTLLVFSLILAAALG) are cleaved as a signal peptide. A propeptide spans 34 to 126 (QMNFTGDQVL…EREAMAKSRR (93 aa)) (activation peptide). The Peptidase M14 domain maps to 138–431 (SYHTLEEISS…MALRTIMEHT (294 aa)). His-196 and Glu-199 together coordinate Zn(2+). Substrate contacts are provided by residues 196 to 199 (HSRE), Arg-254, and 271 to 272 (NR). Cysteines 265 and 288 form a disulfide. Residue His-323 participates in Zn(2+) binding. Substrate contacts are provided by residues 324-325 (SY) and Tyr-375. Residue Glu-397 is the Proton donor/acceptor of the active site.

It belongs to the peptidase M14 family. Zn(2+) serves as cofactor.

The protein resides in the secreted. The sequence is that of Carboxypeptidase A5 (CPA5) from Macaca fascicularis (Crab-eating macaque).